A 2219-amino-acid chain; its full sequence is E3 ubiquitin-protein ligase Ubr3 (2219 aa).

2 disordered regions span residues 1–48 (MDED…DLSS) and 78–134 (AAGA…SALS). The span at 20-29 (VREQTHHPPM) shows a compositional bias: basic and acidic residues. The span at 31–42 (EDQELDNEDGSS) shows a compositional bias: acidic residues. A compositionally biased stretch (low complexity) spans 114–134 (GPTTTTSSGTAAESGAASALS). Residues 222-293 (AKCGLVWVPH…AEGFCSDHGI (72 aa)) form a UBR-type zinc finger. Disordered stretches follow at residues 1348–1367 (SFSLSDGEDQSSDDDSTMDV) and 1440–1464 (QREKQAEAKAREAKEKEERRKKARE). A compositionally biased stretch (acidic residues) spans 1353-1367 (DGEDQSSDDDSTMDV). The RING-type; degenerate zinc-finger motif lies at 1607–1643 (CGHHVHLSCLEAYLKTLYTTQRQPVQDRGEFYCPVCR). Disordered regions lie at residues 1872–1902 (VGSDNSAAESQQQESAAGTTNNRRRAGQQQQ) and 1935–1954 (SAAASAAGSSSTTSTNHGAS). Low complexity predominate over residues 1877–1888 (SAAESQQQESAA).

It belongs to the E3 ubiquitin-protein ligase UBR1-like family. Selectively interacts (via UBR-type zinc finger) with the cleaved form of Diap1; this interaction is enhanced by tal. Interacts with tal and Rrp1. Interacts with ovo isoform B (via N-terminus). Interacts with Cad99C (via the cytoplasmic domain). Interacts with ck and Sans. Interacts with cos (via Kinesin motor domain). Post-translationally, in vitro, self-ubiquitination in the presence of E1, E2 and ubiquitin.

Its subcellular location is the cytoplasm. It is found in the nucleus. It catalyses the reaction S-ubiquitinyl-[E2 ubiquitin-conjugating enzyme]-L-cysteine + [acceptor protein]-L-lysine = [E2 ubiquitin-conjugating enzyme]-L-cysteine + N(6)-ubiquitinyl-[acceptor protein]-L-lysine.. The protein operates within protein modification; protein ubiquitination. Its function is as follows. E3 ubiquitin-protein ligase which is a component of the N-end rule pathway. Recognizes and binds to proteins bearing specific N-terminal residues, leading to their ubiquitination and subsequent degradation. Binds to the E3 ubiquitin-protein ligase Diap1 and enhances its ubiquitination and anti-apoptotic functions. Essential during trichome development for the ubiquitination of the N-terminus of ovo isoform B (svb), converting it from a transcriptional inhibitor to an activator. Positively regulates a hh-signaling pathway which functions in photoreceptor differentiation. Activation of hh up-regulates transcription of Ubr3, which in turn promotes hh signaling by mediating the ubiquitination and degradation of cos. Necessary for auditory transduction: plays a role in Johnston's organ organization by acting in the regulation of zip and ck function in scolopidial apical attachment. Likely to function by acting in a pathway that negatively regulates the ubiquitination of zip, consequently affecting its interaction with ck. May also negatively regulate a component of the SCF (SKP1-CUL1-F-box protein) E3 ubiquitin-protein ligase complex Cul1, which also appears to function in the negative regulation of the zip-ck interaction and scolopidial apical attachment. This chain is E3 ubiquitin-protein ligase Ubr3, found in Drosophila melanogaster (Fruit fly).